Reading from the N-terminus, the 1340-residue chain is WASH complex subunit 2 (1340 aa).

The segment at 1–219 (MNRTTPDQEL…VGSDRGSIVD (219 aa)) is sufficient for interaction with WASHC3, WASHC4 and WASHC5; required for interaction with WASHC1. Phosphoserine occurs at positions 157, 159, 204, 205, and 209. Residues 201 to 213 (GELSSEEGSVGSD) show a composition bias toward low complexity. The tract at residues 201–404 (GELSSEEGSV…SSSKPGKKIP (204 aa)) is disordered. Acidic residues predominate over residues 219 to 231 (DTEEEKEEEESDE). Residues 232-241 (DFAHHSDNDQ) show a composition bias toward basic and acidic residues. 2 stretches are compositionally biased toward acidic residues: residues 249–258 (SDEEEDDDGC) and 265–275 (EKEEEDIEDIE). Serine 287 bears the Phosphoserine mark. Residues 292-306 (LAARIKGDAVGRVDE) are compositionally biased toward basic and acidic residues. Threonine 330 carries the phosphothreonine modification. Over residues 354 to 365 (GSGGGLFSGGKG) the composition is skewed to gly residues. Residues 355-599 (SGGGLFSGGK…QTLSLQAQGE (245 aa)) are sufficient for interaction with CCDC93. Residues 356 to 1340 (GGGLFSGGKG…DDPLNAFGGQ (985 aa)) form an interaction with VPS35 region. The LFa 1 signature appears at 366-377 (LFDDEDEESDLF). Serine 394 and serine 396 each carry phosphoserine. 3 short sequence motifs (LFa) span residues 410 to 418 (VFLGDTDVF), 449 to 462 (LFDD…DDFF), and 481 to 490 (IFGDDEGDLF). Disordered stretches follow at residues 421 to 586 (ASVP…GGTA), 618 to 663 (SSDE…KASL), and 695 to 838 (DSGG…STGV). Positions 450 to 461 (FDDDDGDDDDDF) are enriched in acidic residues. Residues 506 to 516 (DENKARAEKKV) show a composition bias toward basic and acidic residues. Residues 517-527 (SLPSSKNLKPS) show a composition bias toward low complexity. 3 consecutive short sequence motifs (LFa) follow at residues 536-547 (LFSDEEDSEDLF), 571-582 (LFEDEDEEDNLF), and 616-628 (LFSS…WNIP). Phosphoserine occurs at positions 538 and 543. Low complexity predominate over residues 546–566 (LFSSQSASKLKGAPLLPGKLP). Serine 618 and serine 619 each carry phosphoserine. Over residues 636 to 646 (SDSRSKGESRD) the composition is skewed to basic and acidic residues. 3 short sequence motifs (LFa) span residues 663–673 (LFEEDEEDDLF), 689–701 (LFED…GSLF), and 725–737 (LFSD…AQLG). 4 positions are modified to phosphoserine: serine 727, serine 751, serine 786, and serine 801. Residues 740-767 (PVDKKVESAKESLKFGRTDVAESEKEGL) show a composition bias toward basic and acidic residues. The LFa 11 motif lies at 802 to 816 (LFDEEEDKMEDQNTI). Residues 822–833 (EVGKGRDPDARP) show a composition bias toward basic and acidic residues. 2 consecutive short sequence motifs (LFa) follow at residues 838–846 (VFQDEELLF) and 855–861 (DPDVDLF). Residues serine 873 and serine 876 each carry the phosphoserine modification. The LFa 14 signature appears at 877-887 (LFGDDEDDDLF). Disordered regions lie at residues 906 to 950 (DYSV…KEPS) and 987 to 1205 (FPSS…EDED). The span at 916–930 (KHPETIQGIKEKGIW) shows a compositional bias: basic and acidic residues. Residues 936–1340 (QDSSGLAPFK…DDPLNAFGGQ (405 aa)) form an interaction with phospholipids region. Residues 1027 to 1045 (NKSRVKMRGKRRPQTRAAR) are compositionally biased toward basic residues. Positions 1028–1046 (KSRVKMRGKRRPQTRAARR) are required for interaction with F-actin-capping protein subunit alpha (CAPZA1 or CAPZA2 or CAPZA3). Serine 1053 and serine 1086 each carry phosphoserine. A compositionally biased stretch (low complexity) spans 1093–1109 (EALAAAAAPWEGGPVPG). Residue serine 1113 is modified to Phosphoserine. Short sequence motifs (LFa) lie at residues 1128–1135 (LFDSGDIF), 1170–1184 (MFPA…DDLF), 1200–1208 (LLEDEDDLF), 1233–1239 (IFEDDIF), 1261–1269 (LFDDNIDIF), and 1289–1298 (IFDDDMDDIF). Serine 1178 and serine 1179 each carry phosphoserine. Positions 1301 to 1325 (GIQAKTAKPKSRSAQAAPEPRFEHK) are disordered. The LFa 21 signature appears at 1329-1337 (IFDDPLNAF).

The protein belongs to the FAM21 family. Component of the WASH core complex also described as WASH regulatory complex (SHRC) composed of WASHC1, WASHC2, WASHC3, WASHC4 and WASHC5; in the complex interacts (via N-terminus) directly with WASHC1. The WASH core complex associates with the F-actin-capping protein dimer (formed by CAPZA1, CAPZA2 or CAPZA3 and CAPZB) in a transient or substoichiometric manner which was initially described as WASH complex. Interacts with VPS35; mediates the association with the retromer CSC complex. Interacts with FKBP15. Interacts with CCDC93, CCDC22, VPS35L; indicative for an association of the WASH core complex with the CCC and retriever complexes. Directly interacts with TBC1D23.

Its subcellular location is the early endosome membrane. The protein localises to the cell membrane. Its function is as follows. Acts as a component of the WASH core complex that functions as a nucleation-promoting factor (NPF) at the surface of endosomes, where it recruits and activates the Arp2/3 complex to induce actin polymerization, playing a key role in the fission of tubules that serve as transport intermediates during endosome sorting. Mediates the recruitment of the WASH core complex to endosome membranes via binding to phospholipids and VPS35 of the retromer CSC. Mediates the recruitment of the F-actin-capping protein dimer to the WASH core complex probably promoting localized F-actin polymerization needed for vesicle scission. Via its C-terminus binds various phospholipids, most strongly phosphatidylinositol 4-phosphate (PtdIns-(4)P), phosphatidylinositol 5-phosphate (PtdIns-(5)P) and phosphatidylinositol 3,5-bisphosphate (PtdIns-(3,5)P2). Involved in the endosome-to-plasma membrane trafficking and recycling of SNX27-retromer-dependent cargo proteins, such as GLUT1. Required for the association of DNAJC13, ENTR1, ANKRD50 with retromer CSC subunit VPS35. Required for the endosomal recruitment of CCC and retriever complexes subunits COMMD1 and CCDC93 as well as the retrievere complex subunit VPS35L. This is WASH complex subunit 2 from Pongo abelii (Sumatran orangutan).